Reading from the N-terminus, the 360-residue chain is Phenylalanine--tRNA ligase alpha subunit (360 aa).

Glutamate 260 lines the Mg(2+) pocket.

Belongs to the class-II aminoacyl-tRNA synthetase family. Phe-tRNA synthetase alpha subunit type 1 subfamily. In terms of assembly, tetramer of two alpha and two beta subunits. Mg(2+) is required as a cofactor.

It is found in the cytoplasm. It catalyses the reaction tRNA(Phe) + L-phenylalanine + ATP = L-phenylalanyl-tRNA(Phe) + AMP + diphosphate + H(+). The protein is Phenylalanine--tRNA ligase alpha subunit of Bradyrhizobium diazoefficiens (strain JCM 10833 / BCRC 13528 / IAM 13628 / NBRC 14792 / USDA 110).